The sequence spans 387 residues: Putative odorant receptor 19b (387 aa).

The Cytoplasmic segment spans residues 1–40; the sequence is MDISKVDSTRALVNHWRIFRIMGIHPPGKRTFWGRHYTAY. Residues 41–61 traverse the membrane as a helical segment; sequence SMVWNVTFHICIWVSFSVNLL. Residues 62 to 71 are Extracellular-facing; it reads QSNSLETFCE. A helical membrane pass occupies residues 72–92; the sequence is SLCVTMPHTLYMLKLINVRRM. The Cytoplasmic segment spans residues 93 to 127; it reads RGEMISSHWLLRLLDKRLGCADERQIIMAGIERAE. Residues 128-148 form a helical membrane-spanning segment; it reads FIFRTIFRGLACTVVLGIIYI. Residues 149-171 are Extracellular-facing; that stretch reads SASSEPTLMYPTWIPWNWKDSTS. A helical membrane pass occupies residues 172 to 192; sequence AYLATAMLHTTALMANATLVL. Topologically, residues 193-254 are cytoplasmic; the sequence is NLSSYPGTYL…LRLFKSLERS (62 aa). The chain crosses the membrane as a helical span at residues 255–275; that stretch reads LSMTCFLQFFSTACAQCTICY. Topologically, residues 276–285 are extracellular; that stretch reads FLLFGNVGIM. A helical membrane pass occupies residues 286–306; that stretch reads RFMNMLFLLVILTTETLLLCY. Residues 307-336 lie on the Cytoplasmic side of the membrane; it reads TAELPCKEGESLLTAVYSCNWLSQSVNFRR. The chain crosses the membrane as a helical span at residues 337–357; sequence LLLLMLARCQIPMILVSGVIV. Over 358–387 the chain is Extracellular; the sequence is PISMKTFTVMIKGAYTMLTLLNEIRKTSLE.

This sequence belongs to the insect chemoreceptor superfamily. Heteromeric odorant receptor channel (TC 1.A.69) family. Or2a subfamily. In terms of assembly, interacts with Orco. Complexes exist early in the endomembrane system in olfactory sensory neurons (OSNs), coupling these complexes to the conserved ciliary trafficking pathway.

It localises to the cell membrane. Odorant receptor which mediates acceptance or avoidance behavior, depending on its substrates. The odorant receptor repertoire encodes a large collection of odor stimuli that vary widely in identity, intensity, and duration. May form a complex with Orco to form odorant-sensing units, providing sensitive and prolonged odorant signaling and calcium permeability. The protein is Putative odorant receptor 19b of Drosophila melanogaster (Fruit fly).